The chain runs to 3640 residues: MSRKALGSRLSSAHKLQRNWNDWQPRSDSLSASQDGVKCSVSRDRGSEVLFEILPSDRPGTPPLHNDAFTATDALEEGGGYDADGGLSENAYGWKSLGQELRINDVTTDITTFQHGNRALATKDMRKSQDRPLAHSEESRLANLLRRASREDDRERRLATMKQMKEFIVHSENKVVLVKQLDSILSTLNDILNESSKLLQELRQEAAWCLGLLCAALSYEAERIFKWMFLKFSVSTKDEVKLLYLVAVHKALETAGEKKAFSAVMQLVMSNLQSILENLDTPELLCQSVKCILLVARCYPHIFSTNFRDTVDILVGWHIDHTQKHSLTQQVSGWLQSLEQFWVADLAFSTTLLGQFLEDMEAYAEDLSHVVSGESGDEDIPPPTVSLPKLAALLRVFSTVVHSIGERFNPIRGPPITEAYVTDVLNRVLACVTTAKQVFFSEAVLTAGNECVCVLLVSIDLGGQLIDAVISYGLDQLNCCQNCGPEYSLSVLTLLTLVVDQINTKLPASFVEKLLAPKSHLLELRFHREREVMAAAHGVYHAVLSLKNIPILEAAYKLVLGEMGCALNSLLSPLGLPDACPHIQHPAFSQLNFSPERAEFVLIFNLSALTTIGNTKNSLIGMWALSPTVFALLSQNLVIVHSDLAVHHPAVQYAVLYTLYSHCTRHDHFISSSLSSSSPSLFDGAVISTVTTATKRHFSTLLNLLGMLLSKDHLNPEARRLLLTWSLEVALMMKKSETYAPLFSLPSFLKFCKGLLANSLNEDTTICLQACNSLQVLSSSLTMELLQRCVDVCRVQLVHSAVRVRQAFGKLLRSVPMHVALSAHSHSEIKEISLAIRRHMSKVPSNTFHPQDFSDLIGFILYGTVHRGGKEPWLERLYHSCQRLEKKDSAMVPRALLKTEAVLWQWAVWEAAQFTVLSKLRTPLGRAQDTFQTIEGMIRSLAAHSLNTEQELSQWSGGESDEGHHTNQLRLALLLQFLENLEKLMYNAYEGCASALTAPPKGIRTFFYTNRQTCQDWLTRIRLALMRVGLLSGQPAVTVRHGFDLLTEIKNSSTQGPEMEVPVTMLVEALCELRCPEAIQGLAAWSLANTGKSMGWLSSVALQAEGKFEKAALEYQEQLCAVTGMDCSIKVFDRSLLKLTGTNTSSPKHTSSGEGRKTVLLKSSECSPEVLNFLANKACECYVALSDWESVQEWQASMMNLKKNSSSSSVNLKTDFNYIRSMSRFEEGDFTECRAQLELLPGDDYGLLNSTTKDKIDLKRLLPAVLSPDPSELQKAIEVQLLRSAVGAISATNHEQDQKVASSDTLVKYLKQTGRICLGPLRLSTLTLSDSLPTLSTLQLHCANSLENSLCNQHPEDCLIPLFSEALTTCKQQDVQPWLHALRYTTFQREFFQKLKGSSSPVDSHLMELCLTAVKFARKQGNIALATRLLSLCSKPAMSDTEGQDLVQSFRQLSLEGTVGEKWGPELEIEKAKVLFAAGQSVSAMEMLSSCALSYCHSGKCELAACRSVLTLCKWLLADWKDLTPQLKMVVKKNSGSTSLSTLSKNISGLLELPLEDQGMPHITTETTVSVGVGEPDFVLGQLYQLSTTQAPEVAKSWAALASWAYRWGRKVVDNASQGEGVPLLLGEKKEIEELLPAGTSDEDKETIFGILGQAMCRPAGIQDEDMALQNEEDDEDDMVDVIGRQLLGACPWLSDVEDTVTDGLIGVWRRVVDRIFSLYRVSCRAYFTFLKLNAGQVPIDEDDPKLLLNNQNSKQSSDDVIVMATLRLLRLLVKHAGELREGLEHGLASTPTAPWRGIIPQLFSRLNHPEAYIRQSICSLLCRVAQDSPHLILYPAIVGSISLGGEAQTAGNKLPSSLPTLLGNMQGEGLCGGESETGSGPTSQESSRGEEMVMYSSEDQAMMQDCYSKIVDKLSSANPTMVLQVQMLVGELRRVTLLWDELWLGVLQQQHMHVLRRIQQLEDEVKRVQNNNTLRKDEKVAIMREKHSALMKPVVFALDHVRSITAAPAETPHEEWFQETYGDAIHNALERLRSPLNPANPASSWVPFKQIMLSLQQRAQKRASYLLRLDEISPRLTAMANTEMALPGEVSATDAVTIQSVGNTITILPTKTKPKKLYFLGSDGRNYPYLFKGLEDLHLDERIMQFLSIVNTMFTKVNQQESPRFQARHYSVTPLGTRSGLIQWVDGATPLFGLYKRWQQREAVVQAQKAQDSFQQPQNLPMVPRPSELYYSKISPALKAVGLSLDVSRRDWPLSVMRDVLRELMEATPPNLLAKELWCSCTTPSEWWSVTQTYARSTAVMSMVGYIIGLGDRHLDNVLIDMTTGEVVHIDYNVCFEKGKSLRVPEKVPFRMTHNIETALGVTGVEGIFRLSCEQVVQIMRRGRETLLTLLEAFVYDPLVDWTAGGEVGFAGAVYGGGGQQAENKQSKREMERDITRSLFSSRVAEIKVNWFKNRDEMTGVLPQLEEAVDEYLNLQEQLTQVEKVQGKLLEELEFLEGADTRADHPIHSLEHRYSEHTQLQSRQRTVQDAIQGKLSDLDQWISQYQAAFASLEATQLASLLQEISSPIDLGPPSYVPATSFLQNAGQAHLISQCEALEAEVSALLQQRRSQLRGCLEHLHSYATVALLYPRAVLHRHRAHTWKQWMEELVCDMTVDHCQTIYHQYEMQFAPQPPPATCQFLSSIEMALQHHAAETNTRLLRQVERLKAEGASVPVCEEQLQEIERCIKVFLHEDAELGSFSLAGIIVSALCSLTRRNLVMEGAAASAGEQLVELTSRDGAWFLEELCSMSGNITCLVQLLQQCQLLSHDLDIPSPAETSQVVYLTNGVYTCLQELNTNFRQIIFPEALRCMLKGENTLETMLAELDALIDQCADGVSLQGLGEILMAHIRNASMGLEEDPDDHYLDVTRVLRAQYSELIQPRSMESSVQETPKMSAGQMLLVAFDGMFAQLETAFGLLIDKLNSMDVPAAWRKVDVIRESRATQAHFFDNVQTRQVLEEIFFLKRLQTIRDFFRLCGSFAQTLSGTCPTPTDDPPPSNGPVPIVKPLYRGSTVVSEDQMTRPIKAFTADFVRQMLMGLPTQALGLAICSSLSALGMDLIAQVEAKDFGAEGKVSLDDLCKKAVEQGVQAGRLSQLLLNRATVLASSYDTAWKKLDLVRRLEVSIEACKVSLQRNQLHIAMFQWQHEDILGARTQPMTVSPPPRSIILSNMKKKLYKLSQDDASIGSVQEKLASLEGSIEQRLKWAGGANPALAPVLQDFEATIAERRALVIKESQRANQVTFLCSTILNFEGLRTRTPEALNMDAALFELVKRCQATCSYAAQFNTSVSSLELQLLHRLSPAMDMSIGGPEWLVYAQNHLTQEMSSQRAMQEEREQQLESVTETLQLLVDSIKGTLSNHNRQLADVKHLLRAMAKDEENALAEGEEVTYDGSVRQFLSEYKAWQDNVQIVLFTVVQATGQPRSQEQIELLQEIPATLKELKVQSHSIYNGLVGFASPLVTERGSDCISPTSTVQTSFAAAVRCSGVKTQPDSMSQNARKALPRNFGTPADTPPSTLMINSKGLAPSPKRAVRDPKTGRAVQERNSYAVSVWKRVKAKLEGRDVDPNRRMSVTEQVDYVIKEATNVDNLAQLYEGWTAWV.

Positions N21–Q34 are enriched in polar residues. Residues N21–V41 form a disordered region. The FAT domain maps to Y1495–S1843. An HEAT repeat occupies A1794 to S1829. A disordered region spans residues G1870 to G1890. Over residues G1874 to S1887 the composition is skewed to low complexity. Residues V2102–F2441 enclose the PI3K/PI4K catalytic domain. The tract at residues I2108–K2114 is G-loop. The catalytic loop stretch occupies residues G2310–N2318. The segment at H2330–T2354 is activation loop. In terms of domain architecture, FATC spans R3608 to V3640.

The protein belongs to the PI3/PI4-kinase family. Requires Mn(2+) as cofactor. In terms of processing, autophosphorylated.

The protein localises to the nucleus. It localises to the cytoplasm. The enzyme catalyses L-seryl-[protein] + ATP = O-phospho-L-seryl-[protein] + ADP + H(+). The catalysed reaction is L-threonyl-[protein] + ATP = O-phospho-L-threonyl-[protein] + ADP + H(+). Functionally, serine/threonine protein kinase involved in both mRNA surveillance and genotoxic stress response pathways. Recognizes the substrate consensus sequence [ST]-Q. Plays a central role in nonsense-mediated decay (NMD) of mRNAs containing premature stop codons by phosphorylating UPF1/RENT1. This chain is Serine/threonine-protein kinase SMG1, found in Danio rerio (Zebrafish).